We begin with the raw amino-acid sequence, 1592 residues long: Serine/threonine-protein kinase mrck-1 (1592 aa).

Positions 1–954 (MAEPPPDDSA…IFSPVSISAM (954 aa)) are involved in homo-dimerization. Positions 83–351 (FEVLKVIGKG…LSDFQLHPFF (269 aa)) constitute a Protein kinase domain. Residues 89-97 (IGKGAFGEV) and K112 each bind ATP. The Proton acceptor role is filled by D207. The 75-residue stretch at 352–426 (EGIDWNTIRD…THGSLLSDAR (75 aa)) folds into the AGC-kinase C-terminal domain. Phosphoserine is present on S415. Y416 is subject to Phosphotyrosine. Coiled coils occupy residues 444-782 (ELME…KNNS) and 811-871 (LDLQ…IENS). Residues 782–796 (SPLTTSNYIQNTPSG) show a composition bias toward polar residues. The tract at residues 782–801 (SPLTTSNYIQNTPSGWGSRR) is disordered. An involved in binding to membranes, with a preference for di-phosphorylated phosphoinositides (PIPs) region spans residues 955–1534 (ERGHNFERMK…FRTIGKDDRS (580 aa)). Residues 957–1007 (GHNFERMKIKTPTKCGHCTSILIGLDRQGLFCQSCQYACHVSCAERVSQSC) form a Phorbol-ester/DAG-type zinc finger. The Zn(2+) site is built by H958, C971, C974, C988, C991, H996, C999, and C1007. Positions 1026–1154 (GTAYEGLVKT…WVVALSELKT (129 aa)) constitute a PH domain. The region spanning 1181–1479 (IRVAQCCAII…KPLSGDGILS (299 aa)) is the CNH domain. One can recognise a CRIB domain in the interval 1544 to 1557 (ISTPSDFMHIVHMG). The involved in interaction with cdc-42 (GTP-bound). Deletion prevents rescue of a null mutant; furthermore deleted form of mrck-1 is no longer recruited to the cell cortex and instead appears to be completely cytoplasmic stretch occupies residues 1544-1557 (ISTPSDFMHIVHMG).

It belongs to the protein kinase superfamily. AGC Ser/Thr protein kinase family. DMPK subfamily. In terms of assembly, homodimer, via N-terminal domains. Interacts (via the CRIB domain) with cdc-42 (GTP-bound), but with a lower affinity for cdc-42 bound to GDP; the interaction is direct and may play a role in the recruitment of mrck-1 to the apical membrane. Requires Mg(2+) as cofactor. Expressed in embryonic and L4 larval seam cells and in embryonic dorsal and ventral epidermal cells. Also expressed in the pharynx throughout development and in sublateral nerve cords in the L4 larva.

The protein resides in the cytoplasm. Its subcellular location is the cell cortex. The enzyme catalyses L-seryl-[protein] + ATP = O-phospho-L-seryl-[protein] + ADP + H(+). It carries out the reaction L-threonyl-[protein] + ATP = O-phospho-L-threonyl-[protein] + ADP + H(+). Its function is as follows. Serine/threonine-protein kinase. Involved in regulating endoderm precursor cell movements during early gastrulation; activates apical myosin and thereby increases actomyosin contractility and tension in the apical cell cortex, probably as a result of recruitment of mrck-1 to the cortex by a combination of interaction with active cdc-42 and membrane binding. May phosphorylate and inactivate the phosphatase mel-11, and thereby contribute to the regulation of myosin II contractility during embryonic elongation. Involved in controlling canal length and Golgi/ER integrity during excretory canal elongation. The sequence is that of Serine/threonine-protein kinase mrck-1 from Caenorhabditis elegans.